A 161-amino-acid polypeptide reads, in one-letter code: uncharacterized protein (161 aa).

This is an uncharacterized protein from Saimiri sciureus (Common squirrel monkey).